The primary structure comprises 258 residues: Protein CHAPERONE-LIKE PROTEIN OF POR1, chloroplastic (258 aa).

Residues 1 to 48 constitute a chloroplast transit peptide; the sequence is MSSSLLLSGSTVSSSFIAPSKPSLVRNSSKTSLLPFRNVSRSFKTVKC. Thr-49 carries the N-acetylthreonine modification. The segment at 67 to 122 is J-like domain required for holdase chaperone activity; it reads WDPYKRLGVSPYASEEEIWASRNFLLQQYAGHERSEESIEGAFEKLLMSSFIRRKK. A run of 3 helical transmembrane segments spans residues 162 to 182, 207 to 227, and 237 to 257; these read FLFA…GPAF, LIGI…IPMI, and TLEL…CTFL.

This sequence belongs to the chaperone-like protein of POR1 protein family. Interacts with PORB in chloroplast. Interacts with PORA during plastid import. Expressed ubiquitously with higher levels in young leaves, flowers, and the root elongation zone.

Its subcellular location is the mitochondrion membrane. It is found in the plastid. The protein resides in the chloroplast envelope. It localises to the chloroplast thylakoid membrane. In terms of biological role, essential protein required during embryogenesis. Exhibits holdase chaperone activity involved in the stabilization of NADPH:protochlorophyllide oxidoreductase (POR) proteins against photooxidative stress during POR proteins import into chloroplasts. Required for chloroplast biogenesis and development. When expressed in yeast, triggers mitochondria-mediated cell death associated with the loss of mitochondrial membrane potential. The sequence is that of Protein CHAPERONE-LIKE PROTEIN OF POR1, chloroplastic from Arabidopsis thaliana (Mouse-ear cress).